Reading from the N-terminus, the 330-residue chain is Putative aminohydrolase AF_1775 (330 aa).

Zn(2+)-binding residues include His54, His56, His181, and Asp253.

Belongs to the metallo-dependent hydrolases superfamily. ATZ/TRZ family.

This chain is Putative aminohydrolase AF_1775, found in Archaeoglobus fulgidus (strain ATCC 49558 / DSM 4304 / JCM 9628 / NBRC 100126 / VC-16).